The primary structure comprises 101 residues: Large ribosomal subunit protein bL28 (101 aa).

This sequence belongs to the bacterial ribosomal protein bL28 family.

This chain is Large ribosomal subunit protein bL28, found in Caulobacter sp. (strain K31).